Reading from the N-terminus, the 311-residue chain is 4-hydroxy-tetrahydrodipicolinate synthase (311 aa).

Residue threonine 51 coordinates pyruvate. Tyrosine 140 functions as the Proton donor/acceptor in the catalytic mechanism. Catalysis depends on lysine 168, which acts as the Schiff-base intermediate with substrate. Residue isoleucine 209 participates in pyruvate binding.

This sequence belongs to the DapA family. In terms of assembly, homotetramer; dimer of dimers.

The protein localises to the cytoplasm. The enzyme catalyses L-aspartate 4-semialdehyde + pyruvate = (2S,4S)-4-hydroxy-2,3,4,5-tetrahydrodipicolinate + H2O + H(+). It functions in the pathway amino-acid biosynthesis; L-lysine biosynthesis via DAP pathway; (S)-tetrahydrodipicolinate from L-aspartate: step 3/4. In terms of biological role, catalyzes the condensation of (S)-aspartate-beta-semialdehyde [(S)-ASA] and pyruvate to 4-hydroxy-tetrahydrodipicolinate (HTPA). This Streptococcus pneumoniae (strain ATCC BAA-255 / R6) protein is 4-hydroxy-tetrahydrodipicolinate synthase.